A 282-amino-acid polypeptide reads, in one-letter code: Pantothenate synthetase (282 aa).

Met-30–His-37 contributes to the ATP binding site. The Proton donor role is filled by His-37. Position 61 (Gln-61) interacts with (R)-pantoate. Gln-61 contributes to the beta-alanine binding site. Gly-147 to Asp-150 provides a ligand contact to ATP. Gln-153 contributes to the (R)-pantoate binding site. ATP is bound by residues Val-176 and Lys-184 to Arg-187.

Belongs to the pantothenate synthetase family. In terms of assembly, homodimer.

It localises to the cytoplasm. The catalysed reaction is (R)-pantoate + beta-alanine + ATP = (R)-pantothenate + AMP + diphosphate + H(+). The protein operates within cofactor biosynthesis; (R)-pantothenate biosynthesis; (R)-pantothenate from (R)-pantoate and beta-alanine: step 1/1. Catalyzes the condensation of pantoate with beta-alanine in an ATP-dependent reaction via a pantoyl-adenylate intermediate. In Bacillus thuringiensis (strain Al Hakam), this protein is Pantothenate synthetase.